We begin with the raw amino-acid sequence, 837 residues long: Outer membrane usher protein HifC (837 aa).

The N-terminal stretch at 1–26 (MKTKNFPLNKIAFACTLLLANPVAWA) is a signal peptide. A disulfide bridge links C813 with C833.

The protein belongs to the fimbrial export usher family.

Its subcellular location is the cell outer membrane. In terms of biological role, essential for piliation. The chain is Outer membrane usher protein HifC (hifC) from Haemophilus influenzae.